Reading from the N-terminus, the 642-residue chain is Threonine--tRNA ligase (642 aa).

A TGS domain is found at Met1–Thr61. The tract at residues Asp243–Pro534 is catalytic. Cys334, His385, and His511 together coordinate Zn(2+).

It belongs to the class-II aminoacyl-tRNA synthetase family. Homodimer. It depends on Zn(2+) as a cofactor.

The protein localises to the cytoplasm. The enzyme catalyses tRNA(Thr) + L-threonine + ATP = L-threonyl-tRNA(Thr) + AMP + diphosphate + H(+). In terms of biological role, catalyzes the attachment of threonine to tRNA(Thr) in a two-step reaction: L-threonine is first activated by ATP to form Thr-AMP and then transferred to the acceptor end of tRNA(Thr). Also edits incorrectly charged L-seryl-tRNA(Thr). This is Threonine--tRNA ligase from Shewanella woodyi (strain ATCC 51908 / MS32).